A 226-amino-acid chain; its full sequence is UPF0173 metal-dependent hydrolase Dgeo_0136 (226 aa).

This sequence belongs to the UPF0173 family.

This chain is UPF0173 metal-dependent hydrolase Dgeo_0136, found in Deinococcus geothermalis (strain DSM 11300 / CIP 105573 / AG-3a).